The sequence spans 431 residues: Serine--tRNA ligase (431 aa).

238-240 (TAE) is a binding site for L-serine. An ATP-binding site is contributed by 269–271 (RSE). Position 292 (glutamate 292) interacts with L-serine. Residue 356–359 (EISS) participates in ATP binding. Serine 391 is a binding site for L-serine.

The protein belongs to the class-II aminoacyl-tRNA synthetase family. Type-1 seryl-tRNA synthetase subfamily. In terms of assembly, homodimer. The tRNA molecule binds across the dimer.

It is found in the cytoplasm. It carries out the reaction tRNA(Ser) + L-serine + ATP = L-seryl-tRNA(Ser) + AMP + diphosphate + H(+). It catalyses the reaction tRNA(Sec) + L-serine + ATP = L-seryl-tRNA(Sec) + AMP + diphosphate + H(+). The protein operates within aminoacyl-tRNA biosynthesis; selenocysteinyl-tRNA(Sec) biosynthesis; L-seryl-tRNA(Sec) from L-serine and tRNA(Sec): step 1/1. Its function is as follows. Catalyzes the attachment of serine to tRNA(Ser). Is also able to aminoacylate tRNA(Sec) with serine, to form the misacylated tRNA L-seryl-tRNA(Sec), which will be further converted into selenocysteinyl-tRNA(Sec). The sequence is that of Serine--tRNA ligase from Bdellovibrio bacteriovorus (strain ATCC 15356 / DSM 50701 / NCIMB 9529 / HD100).